The following is a 427-amino-acid chain: Histidine--tRNA ligase (427 aa).

Belongs to the class-II aminoacyl-tRNA synthetase family. Homodimer.

It is found in the cytoplasm. The enzyme catalyses tRNA(His) + L-histidine + ATP = L-histidyl-tRNA(His) + AMP + diphosphate + H(+). The polypeptide is Histidine--tRNA ligase (hisS) (Mycobacterium leprae (strain TN)).